Here is a 92-residue protein sequence, read N- to C-terminus: Large ribosomal subunit protein bL28 (92 aa).

The protein belongs to the bacterial ribosomal protein bL28 family.

This is Large ribosomal subunit protein bL28 from Borreliella burgdorferi (strain ATCC 35210 / DSM 4680 / CIP 102532 / B31) (Borrelia burgdorferi).